A 65-amino-acid polypeptide reads, in one-letter code: Sulfur carrier protein TtuB (65 aa).

G65 carries the post-translational modification 1-thioglycine; alternate. G65 bears the Glycyl adenylate; alternate mark. G65 participates in a covalent cross-link: Glycyl cysteine thioester (Gly-Cys) (interchain with C-192 in TtuC); alternate. A Glycyl lysine isopeptide (Gly-Lys) (interchain with K-? in acceptor proteins); alternate cross-link involves residue G65.

Belongs to the TtuB family. In terms of assembly, is able to form a heterocomplex with TtuA. In terms of processing, the C-terminal glycine residue of TtuB is first activated by TtuC as an acyl-adenylate (TtuB-COAMP), and then converted to the thiocarboxylate form (TtuB-COSH) by the cysteine desulfurases IscS or SufS.

It participates in tRNA modification. Functionally, required for the 2-thiolation of 5-methyluridine residue at position 54 in the T loop of tRNAs, leading to 5-methyl-2-thiouridine (m(5)s(2)U or s(2)T). This modification allows thermal stabilization of tRNAs in thermophilic microorganisms, and is essential for cell growth at high temperatures. Thiocarboxylated TtuB functions as the sulfur donor in the sulfurtransferase reaction catalyzed by TtuA. TtuB also functions as a protein modifier covalently attached to lysine residues of the target proteins TtuA and TtuC. TtuB conjugation might play a regulatory role to ensure appropriate sulfur transfer in cells. The polypeptide is Sulfur carrier protein TtuB (Thermus thermophilus (strain ATCC BAA-163 / DSM 7039 / HB27)).